The primary structure comprises 339 residues: Ketol-acid reductoisomerase (NADP(+)) (339 aa).

The KARI N-terminal Rossmann domain occupies 1 to 182 (MRVYYDRDAD…GGGRSGIIET (182 aa)). NADP(+) contacts are provided by residues 24 to 27 (YGSQ), arginine 48, serine 51, serine 53, and 83 to 86 (DELQ). Histidine 108 is an active-site residue. Position 134 (glycine 134) interacts with NADP(+). The KARI C-terminal knotted domain maps to 183–328 (TFREECETDL…EKLRGMMPWI (146 aa)). Residues aspartate 191, glutamate 195, glutamate 227, and glutamate 231 each contribute to the Mg(2+) site. Serine 252 contributes to the substrate binding site.

It belongs to the ketol-acid reductoisomerase family. The cofactor is Mg(2+).

It carries out the reaction (2R)-2,3-dihydroxy-3-methylbutanoate + NADP(+) = (2S)-2-acetolactate + NADPH + H(+). It catalyses the reaction (2R,3R)-2,3-dihydroxy-3-methylpentanoate + NADP(+) = (S)-2-ethyl-2-hydroxy-3-oxobutanoate + NADPH + H(+). The protein operates within amino-acid biosynthesis; L-isoleucine biosynthesis; L-isoleucine from 2-oxobutanoate: step 2/4. It participates in amino-acid biosynthesis; L-valine biosynthesis; L-valine from pyruvate: step 2/4. In terms of biological role, involved in the biosynthesis of branched-chain amino acids (BCAA). Catalyzes an alkyl-migration followed by a ketol-acid reduction of (S)-2-acetolactate (S2AL) to yield (R)-2,3-dihydroxy-isovalerate. In the isomerase reaction, S2AL is rearranged via a Mg-dependent methyl migration to produce 3-hydroxy-3-methyl-2-ketobutyrate (HMKB). In the reductase reaction, this 2-ketoacid undergoes a metal-dependent reduction by NADPH to yield (R)-2,3-dihydroxy-isovalerate. This is Ketol-acid reductoisomerase (NADP(+)) from Magnetospirillum molischianum (Rhodospirillum molischianum).